The following is a 298-amino-acid chain: Tyrosine recombinase XerC (298 aa).

The Core-binding (CB) domain maps to 1 to 83 (MHAAVERFLH…ALSRFADHLV (83 aa)). The 180-residue stretch at 104–283 (HLPRPVDVDQ…DWQHLADAYD (180 aa)) folds into the Tyr recombinase domain. Active-site residues include Arg144, Lys166, His235, Arg238, and His261. The active-site O-(3'-phospho-DNA)-tyrosine intermediate is Tyr270.

The protein belongs to the 'phage' integrase family. XerC subfamily. Forms a cyclic heterotetrameric complex composed of two molecules of XerC and two molecules of XerD.

The protein localises to the cytoplasm. Functionally, site-specific tyrosine recombinase, which acts by catalyzing the cutting and rejoining of the recombining DNA molecules. The XerC-XerD complex is essential to convert dimers of the bacterial chromosome into monomers to permit their segregation at cell division. It also contributes to the segregational stability of plasmids. The sequence is that of Tyrosine recombinase XerC from Chromohalobacter salexigens (strain ATCC BAA-138 / DSM 3043 / CIP 106854 / NCIMB 13768 / 1H11).